The following is a 1285-amino-acid chain: Tat-binding homolog 7 (1285 aa).

Disordered stretches follow at residues 1-95 (MARS…LTYR), 121-173 (MSDD…RTRR), 224-243 (GREEEEEGDEEEAESGEKEQ), and 258-359 (QEDE…ERGR). 2 stretches are compositionally biased toward acidic residues: residues 226–237 (EEEEEGDEEEAE) and 258–270 (QEDEESSNAESSE). Positions 311–325 (NRHHRNRNTSNRRRR) are enriched in basic residues. ATP is bound at residue 446–453 (GPPGTGKT). A Bromo domain is found at 928–1032 (ALQRQMRMFF…NTFRDAIDDM (105 aa)). A disordered region spans residues 1100–1196 (EKLKEKLGIS…PTIQSSSSQE (97 aa)). Residues 1136 to 1149 (KLNKKKKDQKRNKK) are compositionally biased toward basic residues. The segment covering 1155-1175 (PDGDDTEETEEAVAENNVDAD) has biased composition (acidic residues).

It belongs to the AAA ATPase family.

In terms of biological role, thought to form a complex that enhances transcription from repetitive DNA sequences by modulating chromatin structure. In Caenorhabditis briggsae, this protein is Tat-binding homolog 7.